The following is a 320-amino-acid chain: Serpentine receptor class delta-28 (320 aa).

The next 7 membrane-spanning stretches (helical) occupy residues 5-25 (LLHTVLSVVGVSLNAFMMYLA), 38-58 (AIITIKTFTDILTSAMSFFVM), 83-103 (ACYIGHMFMLCFLECNLIWMI), 122-142 (SLVFVAICLSIPSFIHMATWI), 176-196 (LTLIIQLFITSILVLIAYAWI), 230-250 (FLPSFIFLGVFVFVGMFTQLI), and 258-278 (LVSVIFMFSPICSPFSYILFV).

This sequence belongs to the nematode receptor-like protein srd family.

It is found in the membrane. This chain is Serpentine receptor class delta-28 (srd-28), found in Caenorhabditis elegans.